The sequence spans 356 residues: MRVLEEDLRNGYIRILVEDIDDLWILFMVLRKGDIVYARTSREVKPGEGGSSRRIPMVLGLRVEAIEFQEFTEKLRIRGIVVEGPEEFGVKGHYHTIAIGVGDQLAIVRETWSKHSLDILKKGVRRRRILLVSIDYDSACIAVLTEQGVKHHSEIQSDLPGKMYRVEHEEILDEYLSKVASALNNVIQQEEIDAVIIAGPGDLKNKLGENIRRDNRKHVYLDTTSTGGCQGISELLGRDVVKQVVGDLSIVKAKEVVEEFKRLIIKDPQLVAYGVDDVYGAVVYAAVSRIVVAGDLLHEPDDERRARVYEILEKAYETGAEVIIVPGKSDVGLEVQGFGGVIAVLRYRLFRGEHSP.

It belongs to the eukaryotic release factor 1 family. Pelota subfamily. Monomer. A divalent metal cation serves as cofactor.

It is found in the cytoplasm. Functionally, may function in recognizing stalled ribosomes, interact with stem-loop structures in stalled mRNA molecules, and effect endonucleolytic cleavage of the mRNA. May play a role in the release non-functional ribosomes and degradation of damaged mRNAs. Has endoribonuclease activity. This Desulfurococcus amylolyticus (strain DSM 18924 / JCM 16383 / VKM B-2413 / 1221n) (Desulfurococcus kamchatkensis) protein is Protein pelota homolog.